The following is a 410-amino-acid chain: MVLSQRQRDELNRAIADYLRSNGYEEAYSTFKKEAELDVNDELDKKFAGLLEKKWTSVIRLQKKVMELESKLNEAKEEITLGGPVGQKRDPKEWIPRPPEKYALSGHRSPVTRVIFHPVFSLMVSASEDATIKVWDYEAGDFERTLKGHTDSVQDISFDQTGKLLASCSADMTIKLWDFQGFECIRTMHGHDHNVSSVAIMPNGDHIVSASRDKTMKMWEVATGYCVKTFTGHREWVRMVRPNQDGTLLASCSNDQTVRVWVVATKECKAELREHEHVVECISWAPESAHPTISEATGSENKKSGKPGPFLLSGSRDKTIKMWDISTGMCLMTLVGHDNWVRGVLFHPGGRFVVSCADDKTLRIWDYKNKRCMKTLSAHEHFVTSLDFHKASPYVVTGSVDQTVKVWECR.

The LisH domain maps to 7 to 39; the sequence is QRDELNRAIADYLRSNGYEEAYSTFKKEAELDV. A coiled-coil region spans residues 56–82; it reads TSVIRLQKKVMELESKLNEAKEEITLG. WD repeat units follow at residues 106–147, 148–187, 190–229, 232–271, 274–333, 336–377, and 379–410; these read GHRS…RTLK, GHTD…CIRT, GHDH…CVKT, GHRE…CKAE, EHEH…CLMT, GHDN…KTLS, and HEHF…WECR.

The protein belongs to the WD repeat LIS1/nudF family. In terms of assembly, can self-associate. Component of the cytosolic PAF-AH (I) heterotetrameric enzyme, which is composed of PAFAH1B1 (beta), PAFAH1B2 (alpha2) and PAFAH1B3 (alpha1) subunits. The catalytic activity of the enzyme resides in the alpha1 (PAFAH1B3) and alpha2 (PAFAH1B2) subunits, whereas the beta subunit (PAFAH1B1) has regulatory activity. Trimer formation is not essential for the catalytic activity. Interacts with dynein, dynactin, nde1 and ndel1. In terms of tissue distribution, enriched in the photoreceptor cell layer.

The protein localises to the cytoplasm. It localises to the cytoskeleton. Its subcellular location is the microtubule organizing center. The protein resides in the centrosome. Its function is as follows. Regulatory subunit (beta subunit) of the cytosolic type I platelet-activating factor (PAF) acetylhydrolase (PAF-AH (I)), an enzyme that catalyzes the hydrolyze of the acetyl group at the sn-2 position of PAF and its analogs and participates in the PAF inactivation. Regulates the PAF-AH (I) activity in a catalytic dimer composition-dependent manner. Positively regulates the activity of the minus-end directed microtubule motor protein dynein. May enhance dynein-mediated microtubule sliding by targeting dynein to the microtubule plus end. Required for several dynein- and microtubule-dependent processes such as the maintenance of Golgi integrity, the peripheral transport of microtubule fragments and the coupling of the nucleus and centrosome. May be required for proliferation of neuronal precursors and neuronal migration. Involved in the positioning of nuclei in photoreceptor cells. This is Lissencephaly-1 homolog B (pafah1b1b) from Danio rerio (Zebrafish).